The following is a 996-amino-acid chain: Leucine-rich repeat receptor-like kinase protein THICK TASSEL DWARF1 (996 aa).

Positions 1-26 are cleaved as a signal peptide; sequence MPPPTFLLGLLLLLLLAAAAPAPASA. LRR repeat units follow at residues 78 to 103, 104 to 127, 128 to 151, 153 to 178, 180 to 201, 202 to 226, 251 to 275, 276 to 299, 300 to 323, 325 to 349, 351 to 371, 372 to 395, 397 to 419, 420 to 443, 445 to 466, 467 to 490, 491 to 514, 516 to 538, 539 to 562, 563 to 586, and 587 to 611; these read TSRV…VALL, DALA…LASM, PALR…PPAA, FPAL…APHA, SLRY…TFGD, LAAL…LSRL, LQSL…LARL, SRLD…LGAL, TSLR…FAAL, NLKL…DFPF, EVLQ…LGRN, GRLK…LCAG, NLQL…LGDC, KTLT…LFDL, QANM…VIAG, DKIG…IGNL, PALQ…IGRL, NLTR…LMGC, ASLG…VTSL, KILC…MANM, and TSLT…QFLV. A helical membrane pass occupies residues 646–666; it reads KKLLVWLVVLLTLLVLAVLGA. Positions 703–978 constitute a Protein kinase domain; it reads LKEDNIIGKG…TMREVVHMLS (276 aa). ATP is bound by residues 709-717 and Lys-731; that span reads IGKGGAGIV. The active-site Proton acceptor is Asp-828.

It belongs to the protein kinase superfamily. Ser/Thr protein kinase family. Highly expressed in the apex of the vegetative seedlings. Lower expression in young leaves, ears and tassels, embryos and roots. Not expressed in the shoot meristem itself. Detected in the three outermost layers of the inflorescence meristem, and on its flanks at positions of prospective spikelet pair meristems. Not confined to meristematic cells but also detected in primordia of glumes, lemmas and stamens.

The protein resides in the membrane. The catalysed reaction is L-seryl-[protein] + ATP = O-phospho-L-seryl-[protein] + ADP + H(+). It carries out the reaction L-threonyl-[protein] + ATP = O-phospho-L-threonyl-[protein] + ADP + H(+). Functionally, receptor-like kinase protein that regulates meristem size during inflorescence and flower development. Promotes vegetative meristem growth and restricts inflorescence and floral meristem growth. Based on additive and synergistic phenotypes of double mutants, it is probable that unlike CLV1 and CLV2 in A.thaliana, TD1 and FAE2 do not function exclusively in a single pathway. However, KN-1 and TD1 do function in a linear pathway to maintain vegetative meristem homeostasis, but they may interact with different partners during development. The chain is Leucine-rich repeat receptor-like kinase protein THICK TASSEL DWARF1 (TD1) from Zea mays (Maize).